Here is a 150-residue protein sequence, read N- to C-terminus: UPF0540 protein At1g62080 (150 aa).

The signal sequence occupies residues 1–21 (MNATKFLVLLVIGVLCAIVTA). A compositionally biased stretch (low complexity) spans 119-135 (AAAARAKGKVASASRVK). The interval 119-150 (AAAARAKGKVASASRVKGSSEKKKKDRKGKKD) is disordered.

It belongs to the UPF0540 family.

This Arabidopsis thaliana (Mouse-ear cress) protein is UPF0540 protein At1g62080.